The sequence spans 95 residues: Small ribosomal subunit protein uS19 (95 aa).

The segment at 76–95 is disordered; that stretch reads PTRRFGGHADKKAATKGQVR.

It belongs to the universal ribosomal protein uS19 family.

In terms of biological role, protein S19 forms a complex with S13 that binds strongly to the 16S ribosomal RNA. In Pseudothermotoga lettingae (strain ATCC BAA-301 / DSM 14385 / NBRC 107922 / TMO) (Thermotoga lettingae), this protein is Small ribosomal subunit protein uS19.